A 446-amino-acid polypeptide reads, in one-letter code: StAR-related lipid transfer protein 3 (446 aa).

At 1–52 (MSKRPGDLACDLERSLPALASLGTSLSHSQSLSSHFIPPPLEKRRAISDVRR) the chain is on the cytoplasmic side. Positions 47–218 (ISDVRRTFCL…YSPPESFAGS (172 aa)) constitute an MENTAL domain. The chain crosses the membrane as a helical span at residues 53-73 (TFCLFVTFDLLFISLLWIIEL). The Extracellular segment spans residues 74 to 95 (NTNTGIRKNLEQEVIHYSFQSS). A helical transmembrane segment spans residues 96-116 (FFDIFVLAFFRFSGLLLGYAV). Residues 117-121 (LRLQH) lie on the Cytoplasmic side of the membrane. The chain crosses the membrane as a helical span at residues 122–142 (WWVIAVTTLVSSAFLIVKVIL). Residues 143–149 (SELLSKG) lie on the Extracellular side of the membrane. A helical membrane pass occupies residues 150–170 (AFGYLLPIVSFVLAWLETWFL). At 171-446 (DFKVLPQEAE…QRVGELGARA (276 aa)) the chain is on the cytoplasmic side. An FFAT motif is present at residues 207 to 213 (QFYSPPE). Phosphoserine occurs at positions 210, 218, and 222. In terms of domain architecture, START spans 231-444 (SFSAQEREYI…LRQRVGELGA (214 aa)).

This sequence belongs to the STARD3 family. Homodimer. Interacts (via the MENTAL domain) with STARD3NL. Interacts (via phosphorylated FFAT motif) with VAPA (via MSP domain). Interacts (via phosphorylated FFAT motif) with VAPB (via MSP domain). Interacts (via phosphorylated FFAT motif) with MOSPD2 (via MSP domain); this interaction allows enrichment of MOSPD2 around endosomes. Post-translationally, phosphorylation at Ser-210 is necessary and sufficient for the direct interaction of the phosphorylated FFAT motif with the MSP domain of MOSPD2, VAPA and VAPB and allows the tethering of two membranes that participates in the formation of ER-endosome contacts. Phosphorylation of the FFAT motif leads to conformation changes. Additional phosphorylations around the core FFAT motif (QFYSPPE) are not essential but strengthen the interaction with MOSPD2, VAPA and VAPB. Phosphorylation at Ser-210 of FFAT motif drives membrane tethering between the endoplasmic reticulum and late endosomes via interaction with VAPA and VAPB that in turn allows the efficient transport of sterol mediated by the START domain.

It is found in the late endosome membrane. The catalysed reaction is cholesterol(in) = cholesterol(out). In terms of biological role, sterol-binding protein that mediates cholesterol transport from the endoplasmic reticulum to endosomes. The sterol transport mechanism is triggered by phosphorylation of FFAT motif that leads to membrane tethering between the endoplasmic reticulum and late endosomes via interaction with VAPA and VAPB. Acts as a lipid transfer protein that redirects sterol to the endosome at the expense of the cell membrane and favors membrane formation inside endosomes. May also mediate cholesterol transport between other membranes, such as mitochondria membrane or cell membrane. However, such results need additional experimental evidences; probably mainly mediates cholesterol transport from the endoplasmic reticulum to endosomes. Does not activate transcriptional cholesterol sensing. Able to bind other lipids, such as lutein, a xanthophyll carotenoids that form the macular pigment of the retina. The polypeptide is StAR-related lipid transfer protein 3 (Mus musculus (Mouse)).